Here is a 432-residue protein sequence, read N- to C-terminus: MTLWVLGLNHQTAPVDLRERAAFAGDALPRALDSLRILPQVREAALLSTCNRTELYAMADDPQTLVAWLDMHAPGLSGYLYQHRDAEAVRHLFRVATGLDSMVLGEPQILGQVKDAWAVARAHGALGSGLDRLFQQTFSVAKRARTDTRVGANPVSVASTAVRLAQESFARLNESTVLLVGAGETIELAAKHLSEGRVRRLLIANRTLAHAQTLATQHGGVALPLTELDRHLAEADVVFSATAAREPVVTRVQVEQALRTRKRKPMLLFDLAVPRDIEASVAELSDAYLYTVDDLERAVEDNRRSRREAADQAEAIIDLQVARYVETLQANERQAPLKRLRAFGDSTRDELLAKARQQLSNGKPADEVLEQLAHALTNRLLHPPTAALRDAALNNDLDLTSAADRLFPEKPGYRHPPVATPIVRTDDANPAP.

Residues 49–52 (TCNR), Ser-101, 106–108 (EPQ), and Gln-112 contribute to the substrate site. Cys-50 functions as the Nucleophile in the catalytic mechanism. 181 to 186 (GAGETI) provides a ligand contact to NADP(+). Positions 408 to 432 (PEKPGYRHPPVATPIVRTDDANPAP) are disordered.

This sequence belongs to the glutamyl-tRNA reductase family. In terms of assembly, homodimer.

The catalysed reaction is (S)-4-amino-5-oxopentanoate + tRNA(Glu) + NADP(+) = L-glutamyl-tRNA(Glu) + NADPH + H(+). Its pathway is porphyrin-containing compound metabolism; protoporphyrin-IX biosynthesis; 5-aminolevulinate from L-glutamyl-tRNA(Glu): step 1/2. Its function is as follows. Catalyzes the NADPH-dependent reduction of glutamyl-tRNA(Glu) to glutamate 1-semialdehyde (GSA). The polypeptide is Glutamyl-tRNA reductase (Xanthomonas campestris pv. campestris (strain 8004)).